Reading from the N-terminus, the 427-residue chain is Enolase (427 aa).

(2R)-2-phosphoglycerate is bound at residue Gln-163. The Proton donor role is filled by Glu-205. Mg(2+) is bound by residues Asp-242, Glu-285, and Asp-312. Lys-337, Arg-366, Ser-367, and Lys-388 together coordinate (2R)-2-phosphoglycerate. Lys-337 functions as the Proton acceptor in the catalytic mechanism.

This sequence belongs to the enolase family. Requires Mg(2+) as cofactor.

It is found in the cytoplasm. It localises to the secreted. The protein localises to the cell surface. The catalysed reaction is (2R)-2-phosphoglycerate = phosphoenolpyruvate + H2O. The protein operates within carbohydrate degradation; glycolysis; pyruvate from D-glyceraldehyde 3-phosphate: step 4/5. Its function is as follows. Catalyzes the reversible conversion of 2-phosphoglycerate (2-PG) into phosphoenolpyruvate (PEP). It is essential for the degradation of carbohydrates via glycolysis. The chain is Enolase from Ralstonia nicotianae (strain ATCC BAA-1114 / GMI1000) (Ralstonia solanacearum).